A 213-amino-acid polypeptide reads, in one-letter code: Uridine kinase (213 aa).

15-22 (GASASGKS) contacts ATP.

It belongs to the uridine kinase family.

The protein localises to the cytoplasm. It carries out the reaction uridine + ATP = UMP + ADP + H(+). The catalysed reaction is cytidine + ATP = CMP + ADP + H(+). The protein operates within pyrimidine metabolism; CTP biosynthesis via salvage pathway; CTP from cytidine: step 1/3. Its pathway is pyrimidine metabolism; UMP biosynthesis via salvage pathway; UMP from uridine: step 1/1. The protein is Uridine kinase of Yersinia enterocolitica serotype O:8 / biotype 1B (strain NCTC 13174 / 8081).